Reading from the N-terminus, the 84-residue chain is Figainin 2 (84 aa).

The signal sequence occupies residues 1–22 (MAFLKKSLFLVLFLGIVSLSVC). Positions 23-39 (EEEKREGEEKEEKREEE) are enriched in basic and acidic residues. Positions 23–53 (EEEKREGEEKEEKREEEEGKEENEDGNEEHK) are disordered. Residues 23–54 (EEEKREGEEKEEKREEEEGKEENEDGNEEHKE) constitute a propeptide that is removed on maturation. Over residues 40-49 (EGKEENEDGN) the composition is skewed to acidic residues.

In terms of tissue distribution, expressed by the skin glands.

The protein localises to the secreted. Functionally, antimicrobial peptide that displays antibacterial, antiprotozoal, and antiviral activity. Exhibits antibacterial activity against the Gram-positive bacteria S.epidermidis ATCC 12228 (MIC=4 uM), E.casseliflavus ATCC 700327 (MIC=4 uM), S.aureus ATCC 25923 (MIC=8 uM) and E.faecalis ATCC 29212 (MIC=8 uM), and the Gram-negative bacteria E.coli ATCC 25922 (MIC=8 uM), K.pneumoniae ATCC 13883 (MIC=8 uM), the multi-resistant clinical isolate strain K.pneumoniae carbapanemase (KPC) MR (MIC=16 uM), and P.aeruginosa ATCC 27853 (MIC=32 uM). Displays antiprotozoal activity against the epimastigote form of T.cruzi (IC(50)=6.32 uM). Does not show antimicrobial against the fungi C.albicans ATCC 90028 and C.parapsilosis ATCC 22019. Displays antiviral activity against the human viruses chikungunya (EC(50)=17.9 uM), Dengue serotype 4 (EC(50)=20.8 uM) and Yellow Fever (EC(50)=21.8 uM). Shows moderate cytolytic activity against human erythrocytes (HC(50)=48.9 uM), and activates the oxidative burst in human neutrophils. Also displays anti-proliferative effects against MCF-7 breast cancer cells (IC(50)=15.3 uM) and B16F10 murine melanoma cells (IC(50)=12.8 uM). This chain is Figainin 2, found in Boana raniceps (Chaco tree frog).